The following is a 271-amino-acid chain: 60 kDa heat shock protein, mitochondrial (271 aa).

Phosphoserine occurs at positions 30 and 33. An ATP-binding site is contributed by 50–54; it reads DGTTT. Lysine 83 is subject to N6-acetyllysine. N6-acetyllysine; alternate occurs at positions 84, 97, and 112. N6-succinyllysine; alternate occurs at positions 84, 97, and 112. Position 125 is an N6-acetyllysine (lysine 125). An N6-acetyllysine; alternate modification is found at lysine 126. Residue lysine 126 is modified to N6-succinyllysine; alternate. Lysine 145 is modified (N6-acetyllysine). N6-succinyllysine is present on lysine 175. N6-acetyllysine occurs at positions 188 and 237. Glycine 257 is a binding site for ATP. Lysine 270 carries the N6-acetyllysine modification.

Belongs to the chaperonin (HSP60) family. As to quaternary structure, homoheptamer arranged in a ring structure. The functional units of these chaperonins consist of heptameric rings of the large subunit Hsp60, which function as a back-to-back double ring. Interacts with 2 heptameric Hsp10 rings to form the symmetrical football complex. Interacts with HRAS. Interacts with ATAD3A. Interacts with ETFBKMT and EEF1AKMT3. Interacts with MFHAS1. Detected at higher levels in caput epididymal spermatazoa than in cauda epididymal spermatazoa (at protein level).

The protein localises to the mitochondrion matrix. It carries out the reaction ATP + H2O + a folded polypeptide = ADP + phosphate + an unfolded polypeptide.. In terms of biological role, chaperonin implicated in mitochondrial protein import and macromolecular assembly. Together with Hsp10, facilitates the correct folding of imported proteins. May also prevent misfolding and promote the refolding and proper assembly of unfolded polypeptides generated under stress conditions in the mitochondrial matrix. The functional units of these chaperonins consist of heptameric rings of the large subunit Hsp60, which function as a back-to-back double ring. In a cyclic reaction, Hsp60 ring complexes bind one unfolded substrate protein per ring, followed by the binding of ATP and association with 2 heptameric rings of the co-chaperonin Hsp10. This leads to sequestration of the substrate protein in the inner cavity of Hsp60 where, for a certain period of time, it can fold undisturbed by other cell components. Synchronous hydrolysis of ATP in all Hsp60 subunits results in the dissociation of the chaperonin rings and the release of ADP and the folded substrate protein. This chain is 60 kDa heat shock protein, mitochondrial, found in Mesocricetus auratus (Golden hamster).